The following is a 268-amino-acid chain: 1,4-dihydroxy-2-naphthoyl-CoA synthase (268 aa).

Substrate-binding positions include 30 to 31, 70 to 74, 114 to 118, Ser-140, and Ser-146; these read VL, VGGDQ, and YAVGG. 139–141 contributes to the hydrogencarbonate binding site; sequence QSG.

Belongs to the enoyl-CoA hydratase/isomerase family. MenB subfamily. It depends on hydrogencarbonate as a cofactor.

It is found in the plastid. The protein localises to the chloroplast. The catalysed reaction is 2-succinylbenzoyl-CoA + H(+) = 1,4-dihydroxy-2-naphthoyl-CoA + H2O. The protein operates within quinol/quinone metabolism; 1,4-dihydroxy-2-naphthoate biosynthesis; 1,4-dihydroxy-2-naphthoate from chorismate: step 6/7. It functions in the pathway quinol/quinone metabolism; menaquinone biosynthesis. Converts o-succinylbenzoyl-CoA (OSB-CoA) to 1,4-dihydroxy-2-naphthoyl-CoA (DHNA-CoA). This is 1,4-dihydroxy-2-naphthoyl-CoA synthase (menB) from Cyanidium caldarium (Red alga).